A 512-amino-acid chain; its full sequence is Sodium-dependent phosphate transport protein 1, chloroplastic (512 aa).

Residues 1–59 (MNARALLCSSNIHSLYTSNRPPEKTSSSRSLRNLKPSPKSLRVWIYPRNRSSVFRVLVR) constitute a chloroplast transit peptide. The next 11 membrane-spanning stretches (helical) occupy residues 103 to 123 (WVIV…RVNM), 141 to 161 (VGLI…AGGI), 171 to 191 (VLGF…VAAK), 192 to 212 (LGLP…GVAM), 234 to 254 (LVYS…PFLI), 257 to 277 (FGWP…LTLW), 323 to 343 (VWAL…LLTW), 361 to 381 (LLSV…GWIA), 401 to 421 (IGFL…SPTM), 453 to 473 (GVLL…GTAA), and 486 to 506 (VFTI…LFST).

It belongs to the major facilitator superfamily. Sodium/anion cotransporter (TC 2.A.1.14) family. In terms of tissue distribution, expressed in flower buds, sepals of mature flowers and mature leaves, less in senescent leaves and at low levels in roots.

The protein localises to the plastid. It is found in the chloroplast thylakoid membrane. Its function is as follows. Specific for inorganic phosphate transport across the thylakoid membrane in a sodium dependent manner. Binds glutamate but cannot transport it. May act as an ascorbate transporter at the thylakoid membrane. This is Sodium-dependent phosphate transport protein 1, chloroplastic (ANTR1) from Arabidopsis thaliana (Mouse-ear cress).